We begin with the raw amino-acid sequence, 378 residues long: D-alanine--D-alanine ligase (378 aa).

In terms of domain architecture, ATP-grasp spans 149–374 (KVLLAAAGIP…YTDLITKLIE (226 aa)). 189-247 (EAGLQYPLFVKPSRAGSSFGVTKVEHEGDAAELAAAVYEASRHDWRILVEQGIDAREIE) contacts ATP. Mg(2+) contacts are provided by aspartate 328, glutamate 341, and asparagine 343.

It belongs to the D-alanine--D-alanine ligase family. Requires Mg(2+) as cofactor. The cofactor is Mn(2+).

Its subcellular location is the cytoplasm. The catalysed reaction is 2 D-alanine + ATP = D-alanyl-D-alanine + ADP + phosphate + H(+). It participates in cell wall biogenesis; peptidoglycan biosynthesis. In terms of biological role, cell wall formation. The chain is D-alanine--D-alanine ligase from Bifidobacterium adolescentis (strain ATCC 15703 / DSM 20083 / NCTC 11814 / E194a).